Here is a 123-residue protein sequence, read N- to C-terminus: Steroid Delta-isomerase (123 aa).

Residue Y12 is the Proton donor of the active site. The active-site Proton acceptor is the D36. D96 contacts substrate.

In terms of assembly, homodimer.

The catalysed reaction is a 3-oxo-Delta(5)-steroid = a 3-oxo-Delta(4)-steroid. In Nocardioides simplex (Arthrobacter simplex), this protein is Steroid Delta-isomerase (ksdI).